We begin with the raw amino-acid sequence, 187 residues long: dITP/XTP pyrophosphatase (187 aa).

A substrate-binding site is contributed by 7 to 12; that stretch reads TNNPYK. Mg(2+) contacts are provided by Glu-36 and Asp-65. Asp-65 functions as the Proton acceptor in the catalytic mechanism. Substrate is bound by residues Thr-66, 140-143, Lys-163, and 168-169; these read FGYD and HR.

It belongs to the HAM1 NTPase family. As to quaternary structure, homodimer. Mg(2+) serves as cofactor.

It carries out the reaction XTP + H2O = XMP + diphosphate + H(+). The catalysed reaction is dITP + H2O = dIMP + diphosphate + H(+). It catalyses the reaction ITP + H2O = IMP + diphosphate + H(+). Pyrophosphatase that catalyzes the hydrolysis of nucleoside triphosphates to their monophosphate derivatives, with a high preference for the non-canonical purine nucleotides XTP (xanthosine triphosphate), dITP (deoxyinosine triphosphate) and ITP. Seems to function as a house-cleaning enzyme that removes non-canonical purine nucleotides from the nucleotide pool, thus preventing their incorporation into DNA/RNA and avoiding chromosomal lesions. This is dITP/XTP pyrophosphatase from Pyrobaculum aerophilum (strain ATCC 51768 / DSM 7523 / JCM 9630 / CIP 104966 / NBRC 100827 / IM2).